The primary structure comprises 61 residues: Photosystem II reaction center protein Z (61 aa).

2 consecutive transmembrane segments (helical) span residues 5–25 (LTALLVLISLALVVTVPVALA) and 38–58 (NKAFQLWVGLVVAIATADGIS).

It belongs to the PsbZ family. PSII is composed of 1 copy each of membrane proteins PsbA, PsbB, PsbC, PsbD, PsbE, PsbF, PsbH, PsbI, PsbJ, PsbK, PsbL, PsbM, PsbT, PsbX, PsbY, PsbZ, Psb30/Ycf12, at least 3 peripheral proteins of the oxygen-evolving complex and a large number of cofactors. It forms dimeric complexes.

The protein localises to the plastid. The protein resides in the chloroplast thylakoid membrane. In terms of biological role, may control the interaction of photosystem II (PSII) cores with the light-harvesting antenna, regulates electron flow through the 2 photosystem reaction centers. PSII is a light-driven water plastoquinone oxidoreductase, using light energy to abstract electrons from H(2)O, generating a proton gradient subsequently used for ATP formation. The protein is Photosystem II reaction center protein Z of Skeletonema costatum (Marine centric diatom).